The following is a 976-amino-acid chain: 3-O-beta-L-arabinopyranosyl-alpha-L-arabinofuranosidase (976 aa).

The first 28 residues, 1 to 28 (MSHRNKALVAIVAGTALLISSGAAIGQA), serve as a signal peptide directing secretion. The active-site Proton donor is E190. The Nucleophile role is filled by E315. The CBM6 domain maps to 519 to 654 (LLVEEVENTV…DNTLDKFLLY (136 aa)).

It belongs to the glycosyl hydrolase 39 family.

Its subcellular location is the secreted. It catalyses the reaction Hydrolysis of beta-L-Arap-(1-&gt;3)-L-Araf disaccharides from non-reducing terminals in branches of type II arabinogalactan attached to proteins.. Functionally, hydrolase involved in the degradation of the gum arabic arabinogalactan protein (AGP) and larch AGP. Catalyzes the release of 3-O-beta-L-arabinopyranosyl-L-arabinose (beta-L-Arap-(1-&gt;3)-L-Ara) from gum arabic AGP and larch AGP. Also cleaves a small amount of beta-L-Arap-(1-&gt;3)-L-Ara from sugar beet arabinan, but wheat AGP cannot be used as a substrate. Can also release 3-O-alpha-D-galactopyranosyl-L-arabinose (alpha-D-Galp-(1-&gt;3)-L-Ara) from gum arabic AGP, with low efficiency. The sequence is that of 3-O-beta-L-arabinopyranosyl-alpha-L-arabinofuranosidase from Bifidobacterium pseudocatenulatum.